Here is a 97-residue protein sequence, read N- to C-terminus: MTAKGQMLQDPFLNALRKEHVPVSIYLVNGIKLQGQVESFDQYVVLLRNTSVTQMVYKHAISTIVPARSVNLQHENRPQAAPTSTLVQVETVQQPAE.

Residues 10 to 70 form the Sm domain; the sequence is DPFLNALRKE…ISTIVPARSV (61 aa). The segment at 74–97 is disordered; that stretch reads HENRPQAAPTSTLVQVETVQQPAE. Over residues 81–97 the composition is skewed to polar residues; that stretch reads APTSTLVQVETVQQPAE.

The protein belongs to the Hfq family. In terms of assembly, homohexamer.

RNA chaperone that binds small regulatory RNA (sRNAs) and mRNAs to facilitate mRNA translational regulation in response to envelope stress, environmental stress and changes in metabolite concentrations. Also binds with high specificity to tRNAs. The polypeptide is RNA-binding protein Hfq (Neisseria meningitidis serogroup A / serotype 4A (strain DSM 15465 / Z2491)).